Consider the following 130-residue polypeptide: Small ribosomal subunit protein uS9 (130 aa).

The segment at 111 to 130 (VERKKPGLKKARKASQFSKR) is disordered. Over residues 116–130 (PGLKKARKASQFSKR) the composition is skewed to basic residues.

This sequence belongs to the universal ribosomal protein uS9 family.

In Lactococcus lactis subsp. lactis (strain IL1403) (Streptococcus lactis), this protein is Small ribosomal subunit protein uS9.